A 678-amino-acid chain; its full sequence is Glycine--tRNA ligase beta subunit (678 aa).

This sequence belongs to the class-II aminoacyl-tRNA synthetase family. In terms of assembly, tetramer of two alpha and two beta subunits.

The protein localises to the cytoplasm. It catalyses the reaction tRNA(Gly) + glycine + ATP = glycyl-tRNA(Gly) + AMP + diphosphate. The chain is Glycine--tRNA ligase beta subunit from Streptococcus thermophilus (strain ATCC BAA-491 / LMD-9).